The following is a 58-amino-acid chain: MATVKVTLVKSLNGRLANHKACVKGLGLRRINHTVEVQDTPENRGMINKAYYLLRVEG.

This sequence belongs to the universal ribosomal protein uL30 family. As to quaternary structure, part of the 50S ribosomal subunit.

In Pseudomonas aeruginosa (strain LESB58), this protein is Large ribosomal subunit protein uL30.